The sequence spans 115 residues: UPF0122 protein NT01CX_2214 (115 aa).

Belongs to the UPF0122 family.

Its function is as follows. Might take part in the signal recognition particle (SRP) pathway. This is inferred from the conservation of its genetic proximity to ftsY/ffh. May be a regulatory protein. The protein is UPF0122 protein NT01CX_2214 of Clostridium novyi (strain NT).